The chain runs to 359 residues: Growth hormone-regulated TBC protein 1 (359 aa).

Residues 74 to 281 (GIPLEHRARV…RIWDCLFNEG (208 aa)) form the Rab-GAP TBC domain.

Highly expressed in testes, expression greatly increased at postnatal day 20 and remained high up to day 90. Moderately expressed in kidney and liver, weakly expressed in intestine, lung, ovaries and stomach. Expression of Growth hormone increased the expression in testis but decreased expression in liver and kidney.

May act as a GTPase-activating protein for Rab family protein(s). In Mus musculus (Mouse), this protein is Growth hormone-regulated TBC protein 1 (Grtp1).